We begin with the raw amino-acid sequence, 256 residues long: Thiazole synthase (256 aa).

Lys-95 acts as the Schiff-base intermediate with DXP in catalysis. 1-deoxy-D-xylulose 5-phosphate is bound by residues Gly-156, 182 to 183, and 204 to 205; these read AG and NT.

It belongs to the ThiG family. Homotetramer. Forms heterodimers with either ThiH or ThiS.

The protein localises to the cytoplasm. The catalysed reaction is [ThiS sulfur-carrier protein]-C-terminal-Gly-aminoethanethioate + 2-iminoacetate + 1-deoxy-D-xylulose 5-phosphate = [ThiS sulfur-carrier protein]-C-terminal Gly-Gly + 2-[(2R,5Z)-2-carboxy-4-methylthiazol-5(2H)-ylidene]ethyl phosphate + 2 H2O + H(+). The protein operates within cofactor biosynthesis; thiamine diphosphate biosynthesis. In terms of biological role, catalyzes the rearrangement of 1-deoxy-D-xylulose 5-phosphate (DXP) to produce the thiazole phosphate moiety of thiamine. Sulfur is provided by the thiocarboxylate moiety of the carrier protein ThiS. In vitro, sulfur can be provided by H(2)S. This chain is Thiazole synthase, found in Escherichia coli O45:K1 (strain S88 / ExPEC).